Consider the following 506-residue polypeptide: Maturase K (506 aa).

This sequence belongs to the intron maturase 2 family. MatK subfamily.

It localises to the plastid. It is found in the chloroplast. Usually encoded in the trnK tRNA gene intron. Probably assists in splicing its own and other chloroplast group II introns. The polypeptide is Maturase K (Medicago truncatula (Barrel medic)).